A 298-amino-acid chain; its full sequence is GTPase Era (298 aa).

The Era-type G domain maps to 3 to 170 (KSGFVAILGR…VQLLKDNLEE (168 aa)). The tract at residues 11-18 (GRPNVGKS) is G1. 11–18 (GRPNVGKS) is a binding site for GTP. The segment at 37-41 (QTTRN) is G2. The tract at residues 58–61 (DTPG) is G3. Residues 58 to 62 (DTPGI) and 120 to 123 (NKID) each bind GTP. Residues 120–123 (NKID) are G4. The tract at residues 149-151 (ISA) is G5. Positions 201-279 (TQQEVPHSVA…YLETWVKVKK (79 aa)) constitute a KH type-2 domain.

It belongs to the TRAFAC class TrmE-Era-EngA-EngB-Septin-like GTPase superfamily. Era GTPase family. In terms of assembly, monomer.

Its subcellular location is the cytoplasm. It is found in the cell membrane. In terms of biological role, an essential GTPase that binds both GDP and GTP, with rapid nucleotide exchange. Plays a role in 16S rRNA processing and 30S ribosomal subunit biogenesis and possibly also in cell cycle regulation and energy metabolism. This is GTPase Era from Streptococcus equi subsp. zooepidemicus (strain MGCS10565).